Reading from the N-terminus, the 454-residue chain is Lipase member H (454 aa).

The N-terminal stretch at 1 to 23 is a signal peptide; it reads MIYRKIIWGILYVTLMLFDTHRA. 3 N-linked (GlcNAc...) asparagine glycosylation sites follow: N73, N137, and N151. S161 (nucleophile) is an active-site residue. D185 acts as the Charge relay system in catalysis. C240 and C253 are disulfide-bonded. H255 serves as the catalytic Charge relay system. N267 is a glycosylation site (N-linked (GlcNAc...) asparagine). Cystine bridges form between C277-C288 and C291-C299. An N-linked (GlcNAc...) asparagine glycan is attached at N358. A disulfide bridge links C430 with C449.

Belongs to the AB hydrolase superfamily. Lipase family.

It is found in the secreted. It localises to the cell membrane. It carries out the reaction 1-hexadecanoyl-2-(9Z-octadecenoyl)-sn-glycero-3-phosphate + H2O = 2-(9Z-octadecenoyl)-sn-glycero-3-phosphate + hexadecanoate + H(+). Hydrolyzes specifically phosphatidic acid (PA) to produce 2-acyl lysophosphatidic acid (LPA; a potent bioactive lipid mediator) and fatty acid. Does not hydrolyze other phospholipids, like phosphatidylserine (PS), phosphatidylcholine (PC) and phosphatidylethanolamine (PE) or triacylglycerol (TG). This chain is Lipase member H (liph), found in Danio rerio (Zebrafish).